The chain runs to 277 residues: Carbonyl reductase [NADPH] 1 (277 aa).

At Ser-2 the chain carries N-acetylserine. Residues Ser-2 and Ser-30 each carry the phosphoserine modification. NADP(+)-binding positions include 10–34 (VTGANKGIGFVIVRDLCRRFSGDVV), 63–64 (DI), and Asn-90. Glutathione is bound by residues 95–97 (FKT) and Gln-106. Substrate is bound at residue Ser-140. 193-194 (AY) contacts glutathione. Residue Tyr-194 is the Proton acceptor of the active site. Residues 194-198 (YGVTK) and 231-233 (VRT) each bind NADP(+). Lys-239 bears the N6-1-carboxyethyl lysine mark.

The protein belongs to the short-chain dehydrogenases/reductases (SDR) family. Monomer.

It localises to the cytoplasm. It catalyses the reaction a secondary alcohol + NADP(+) = a ketone + NADPH + H(+). The catalysed reaction is prostaglandin F2alpha + NADP(+) = prostaglandin E2 + NADPH + H(+). It carries out the reaction prostaglandin E1 + NADP(+) = 15-oxoprostaglandin E1 + NADPH + H(+). The enzyme catalyses menadione + NADPH + H(+) = menadiol + NADP(+). It catalyses the reaction prostaglandin D2 + NADP(+) = 15-oxoprostaglandin D2 + NADPH + H(+). The catalysed reaction is prostaglandin E2 + NADP(+) = 15-oxoprostaglandin E2 + NADPH + H(+). It carries out the reaction prostaglandin F2alpha + NADP(+) = 15-oxoprostaglandin F2alpha + NADPH + H(+). The enzyme catalyses daunorubicin + NADPH + H(+) = 13-dihydrodaunorubicin + NADP(+). It catalyses the reaction S-nitrosoglutathione + NADPH + H(+) = S-(hydroxysulfenamide)glutathione + NADP(+). The catalysed reaction is a primary alcohol + NADP(+) = an aldehyde + NADPH + H(+). It carries out the reaction cortisol + NADPH + H(+) = 20beta-dihydrocortisol + NADP(+). The enzyme catalyses corticosterone + NADPH + H(+) = 20beta-dihydrocorticosterone + NADP(+). Functionally, NADPH-dependent reductase with broad substrate specificity. Catalyzes the reduction of a wide variety of carbonyl compounds including quinones, prostaglandins, menadione, plus various xenobiotics. Catalyzes the reduction of the antitumor anthracyclines doxorubicin and daunorubicin to the cardiotoxic compounds doxorubicinol and daunorubicinol. Can convert prostaglandin E to prostaglandin F2-alpha. Can bind glutathione, which explains its higher affinity for glutathione-conjugated substrates. Catalyzes the reduction of S-nitrosoglutathione. In addition, participates in the glucocorticoid metabolism by catalyzing the NADPH-dependent cortisol/corticosterone into 20beta-dihydrocortisol (20b-DHF) or 20beta-corticosterone (20b-DHB), which are weak agonists of NR3C1 and NR3C2 in adipose tissue. The sequence is that of Carbonyl reductase [NADPH] 1 from Bos taurus (Bovine).